The primary structure comprises 412 residues: Protein trichome birefringence-like 13 (412 aa).

Residues 9–29 (PSLFPLLSLLCFISIFLLLSL) traverse the membrane as a helical; Signal-anchor for type II membrane protein segment. The GDS motif signature appears at 137 to 139 (GDS). The DCXHWCLPGXXDXWN motif motif lies at 385-399 (DCMHWCLPGLTDTWN).

It belongs to the PC-esterase family. TBL subfamily.

Its subcellular location is the membrane. Functionally, may act as a bridging protein that binds pectin and other cell wall polysaccharides. Probably involved in maintaining esterification of pectins. May be involved in the specific O-acetylation of cell wall polymers. This Arabidopsis thaliana (Mouse-ear cress) protein is Protein trichome birefringence-like 13 (TBL13).